We begin with the raw amino-acid sequence, 985 residues long: Phosphoenolpyruvate carboxylase (985 aa).

Positions 1-17 are enriched in low complexity; the sequence is MTQSAARRASSRATPAR. The tract at residues 1-55 is disordered; the sequence is MTQSAARRASSRATPARKTPPAPASQTPAPSPGGTAGTALGPTSRRSSGSAAAKD. Active-site residues include His-193 and Lys-634.

Belongs to the PEPCase type 1 family. Mg(2+) serves as cofactor.

The enzyme catalyses oxaloacetate + phosphate = phosphoenolpyruvate + hydrogencarbonate. Forms oxaloacetate, a four-carbon dicarboxylic acid source for the tricarboxylic acid cycle. This is Phosphoenolpyruvate carboxylase from Ralstonia nicotianae (strain ATCC BAA-1114 / GMI1000) (Ralstonia solanacearum).